The following is an 853-amino-acid chain: DNA mismatch repair protein MutS (853 aa).

ATP is bound at residue 614–621; sequence GPNMGGKS.

This sequence belongs to the DNA mismatch repair MutS family.

In terms of biological role, this protein is involved in the repair of mismatches in DNA. It is possible that it carries out the mismatch recognition step. This protein has a weak ATPase activity. The sequence is that of DNA mismatch repair protein MutS from Shigella flexneri serotype 5b (strain 8401).